The chain runs to 458 residues: Nuclear transcription factor Y subunit gamma (458 aa).

Residues 305–315 (QQQFSQFTDGQ) are compositionally biased toward low complexity. The disordered stretch occupies residues 305-379 (QQQFSQFTDG…QQSSTSPPPS (75 aa)). Residues 339 to 351 (TGNSTPCTSSLPT) are compositionally biased toward polar residues.

This sequence belongs to the NFYC/HAP5 subunit family. Heterotrimeric transcription factor composed of three components, NF-YA, NF-YB and NF-YC. NF-YB and NF-YC must interact and dimerize for NF-YA association and DNA binding.

The protein localises to the nucleus. Component of the sequence-specific heterotrimeric transcription factor (NF-Y) which specifically recognizes a 5'-CCAAT-3' box motif found in the promoters of its target genes. NF-Y can function as both an activator and a repressor, depending on its interacting cofactors. This Homo sapiens (Human) protein is Nuclear transcription factor Y subunit gamma (NFYC).